The sequence spans 672 residues: Probable urocanate hydratase (672 aa).

Residues 128–129 (GG), glutamine 206, 253–255 (GMS), glutamate 273, 318–319 (NV), 340–344 (QTSLH), 351–352 (YY), tyrosine 400, and glycine 592 contribute to the NAD(+) site.

Belongs to the urocanase family. The cofactor is NAD(+).

It carries out the reaction 4-imidazolone-5-propanoate = trans-urocanate + H2O. Its pathway is amino-acid degradation; L-histidine degradation into L-glutamate; N-formimidoyl-L-glutamate from L-histidine: step 2/3. The sequence is that of Probable urocanate hydratase (uroc1) from Dictyostelium discoideum (Social amoeba).